We begin with the raw amino-acid sequence, 469 residues long: ATP-dependent protease ATPase subunit HslU (469 aa).

Residues Ile-24 and 66–71 (GVGKTE) contribute to the ATP site. Positions 159–179 (LFGSMNQPDEPAEEEVDQELK) are disordered. ATP contacts are provided by Asp-282, Glu-347, and Arg-419.

The protein belongs to the ClpX chaperone family. HslU subfamily. A double ring-shaped homohexamer of HslV is capped on each side by a ring-shaped HslU homohexamer. The assembly of the HslU/HslV complex is dependent on binding of ATP.

It localises to the cytoplasm. Its function is as follows. ATPase subunit of a proteasome-like degradation complex; this subunit has chaperone activity. The binding of ATP and its subsequent hydrolysis by HslU are essential for unfolding of protein substrates subsequently hydrolyzed by HslV. HslU recognizes the N-terminal part of its protein substrates and unfolds these before they are guided to HslV for hydrolysis. In Listeria innocua serovar 6a (strain ATCC BAA-680 / CLIP 11262), this protein is ATP-dependent protease ATPase subunit HslU.